The primary structure comprises 227 residues: Cytochrome c oxidase subunit 2 (227 aa).

The Mitochondrial intermembrane portion of the chain corresponds to 1–14 (MAHPFQTGLQDATS). Residues 15–45 (PIMEELLHFHDHTLMIVFLISSLVLYIISIM) traverse the membrane as a helical segment. At 46 to 59 (LTTKLTHTNTMDAQ) the chain is on the mitochondrial matrix side. Residues 60–87 (EVETVWTILPAIILIMIALPSLRILYMM) traverse the membrane as a helical segment. Residues 88 to 227 (DEINNPSLTV…YFEKWSASML (140 aa)) are Mitochondrial intermembrane-facing. Residues H161, C196, E198, C200, H204, and M207 each coordinate Cu cation. E198 lines the Mg(2+) pocket. Y218 bears the Phosphotyrosine mark.

The protein belongs to the cytochrome c oxidase subunit 2 family. As to quaternary structure, component of the cytochrome c oxidase (complex IV, CIV), a multisubunit enzyme composed of 14 subunits. The complex is composed of a catalytic core of 3 subunits MT-CO1, MT-CO2 and MT-CO3, encoded in the mitochondrial DNA, and 11 supernumerary subunits COX4I, COX5A, COX5B, COX6A, COX6B, COX6C, COX7A, COX7B, COX7C, COX8 and NDUFA4, which are encoded in the nuclear genome. The complex exists as a monomer or a dimer and forms supercomplexes (SCs) in the inner mitochondrial membrane with NADH-ubiquinone oxidoreductase (complex I, CI) and ubiquinol-cytochrome c oxidoreductase (cytochrome b-c1 complex, complex III, CIII), resulting in different assemblies (supercomplex SCI(1)III(2)IV(1) and megacomplex MCI(2)III(2)IV(2)). Found in a complex with TMEM177, COA6, COX18, COX20, SCO1 and SCO2. Interacts with TMEM177 in a COX20-dependent manner. Interacts with COX20. Interacts with COX16. Requires Cu cation as cofactor.

It is found in the mitochondrion inner membrane. It carries out the reaction 4 Fe(II)-[cytochrome c] + O2 + 8 H(+)(in) = 4 Fe(III)-[cytochrome c] + 2 H2O + 4 H(+)(out). Component of the cytochrome c oxidase, the last enzyme in the mitochondrial electron transport chain which drives oxidative phosphorylation. The respiratory chain contains 3 multisubunit complexes succinate dehydrogenase (complex II, CII), ubiquinol-cytochrome c oxidoreductase (cytochrome b-c1 complex, complex III, CIII) and cytochrome c oxidase (complex IV, CIV), that cooperate to transfer electrons derived from NADH and succinate to molecular oxygen, creating an electrochemical gradient over the inner membrane that drives transmembrane transport and the ATP synthase. Cytochrome c oxidase is the component of the respiratory chain that catalyzes the reduction of oxygen to water. Electrons originating from reduced cytochrome c in the intermembrane space (IMS) are transferred via the dinuclear copper A center (CU(A)) of subunit 2 and heme A of subunit 1 to the active site in subunit 1, a binuclear center (BNC) formed by heme A3 and copper B (CU(B)). The BNC reduces molecular oxygen to 2 water molecules using 4 electrons from cytochrome c in the IMS and 4 protons from the mitochondrial matrix. This chain is Cytochrome c oxidase subunit 2 (MT-CO2), found in Ailuropoda melanoleuca (Giant panda).